The chain runs to 397 residues: Linalool dehydratase/isomerase (397 aa).

The signal sequence occupies residues 1–26; the sequence is MRFTLKTTAIVSAAALLAGFGPPPRA. Catalysis depends on Asp-64, which acts as the Proton donor/acceptor. Intrachain disulfides connect Cys-74–Cys-127 and Cys-196–Cys-205. Position 196 (Cys-196) interacts with (2E)-geraniol.

Homotetramer. Homopentamer.

It localises to the periplasm. It catalyses the reaction (S)-linalool = beta-myrcene + H2O. It carries out the reaction (2E)-geraniol = (S)-linalool. It functions in the pathway terpene metabolism; monoterpene degradation. With respect to regulation, is inhibited by molecular oxygen, high salt concentrations (NaCl, KCl, or MgCl(2)), urea, and Ti(III)citrate. Activity is not affected by EDTA. Functionally, anaerobically catalyzes the stereospecific hydration of beta-myrcene to (3S)-linalool and the isomerization of (3S)-linalool to geraniol. Is thus involved in the initial steps of the anaerobic degradation of the monoterpene beta-myrcene. Also catalyzes the reverse reactions, i.e. the isomerization of geraniol to linalool and the dehydration of linalool to myrcene. In this direction, the formation of myrcene from geraniol may be seen as a detoxification process for the monoterpene alcohol. Shows a relatively broad substrate specificity and can use various geraniol and linalool derivatives. Substrates required a specific alpha-methylallyl alcohol signature motif. Neither the monoterpenes alpha- and beta-ocimene nor the monoterpenoids citronellol and nerol can be used as substrates. The protein is Linalool dehydratase/isomerase of Castellaniella defragrans (strain DSM 12143 / CCUG 39792 / 65Phen) (Alcaligenes defragrans).